Here is a 597-residue protein sequence, read N- to C-terminus: Cysteine/serine-rich nuclear protein 3 (597 aa).

2 disordered regions span residues 22–64 (EDVD…TPSS) and 348–407 (CQGD…GFVE). Low complexity predominate over residues 42 to 52 (SSESADSGDSV). Polar residues predominate over residues 53–64 (NPSTSNHFTPSS). The segment covering 348–359 (CQGDEEEEEEDG) has biased composition (acidic residues). Residues 361 to 376 (SFCSGATDSSTQSLAP) show a composition bias toward polar residues. Acidic residues predominate over residues 378 to 401 (ESDEEEEEEEEEEEEEEEDDDDDK).

It belongs to the AXUD1 family. As to expression, detected only in the brain of 15 dpc, 18 dpc, newborn and P6 mice (at protein level).

It is found in the nucleus. Functionally, binds to the consensus sequence 5'-AGAGTG-3' and has transcriptional activator activity. Plays a role in apoptosis. This Mus musculus (Mouse) protein is Cysteine/serine-rich nuclear protein 3 (Csrnp3).